Here is a 441-residue protein sequence, read N- to C-terminus: Ribulose bisphosphate carboxylase large chain (441 aa).

Lys-5 carries the N6,N6,N6-trimethyllysine modification. Positions 114 and 164 each coordinate substrate. Lys-166 (proton acceptor) is an active-site residue. Residue Lys-168 coordinates substrate. Residues Lys-192, Asp-194, and Glu-195 each contribute to the Mg(2+) site. Lys-192 is subject to N6-carboxylysine. The Proton acceptor role is filled by His-285. The substrate site is built by Arg-286, His-318, and Ser-370.

The protein belongs to the RuBisCO large chain family. Type I subfamily. As to quaternary structure, heterohexadecamer of 8 large chains and 8 small chains; disulfide-linked. The disulfide link is formed within the large subunit homodimers. It depends on Mg(2+) as a cofactor. The disulfide bond which can form in the large chain dimeric partners within the hexadecamer appears to be associated with oxidative stress and protein turnover.

It localises to the plastid. The protein resides in the chloroplast. The enzyme catalyses 2 (2R)-3-phosphoglycerate + 2 H(+) = D-ribulose 1,5-bisphosphate + CO2 + H2O. It carries out the reaction D-ribulose 1,5-bisphosphate + O2 = 2-phosphoglycolate + (2R)-3-phosphoglycerate + 2 H(+). Its function is as follows. RuBisCO catalyzes two reactions: the carboxylation of D-ribulose 1,5-bisphosphate, the primary event in carbon dioxide fixation, as well as the oxidative fragmentation of the pentose substrate in the photorespiration process. Both reactions occur simultaneously and in competition at the same active site. The chain is Ribulose bisphosphate carboxylase large chain from Pellaea rotundifolia (Button fern).